The chain runs to 586 residues: ATP-dependent RNA helicase HAS1 (586 aa).

The disordered stretch occupies residues 1-107; the sequence is MASDLSKKRK…GDGSLLGPSV (107 aa). Residues 39–60 are compositionally biased toward acidic residues; sequence EDSDAERDNSSDPEIENQEPEV. Residues 112–140 carry the Q motif motif; that stretch reads QAFSELNLSDKTMMSINEMGFTKMTEIQR. Residues 143–318 form the Helicase ATP-binding domain; it reads IPPLLAGKDV…RISLRPGPLY (176 aa). 156 to 163 is an ATP binding site; sequence AKTGSGKT. A DEAD box motif is present at residues 265–268; sequence DEAD. One can recognise a Helicase C-terminal domain in the interval 332 to 502; the sequence is GLDQGYVIVD…NVQSQLEKLI (171 aa). Residues 557 to 586 form a disordered region; it reads TLGAGMSRDKKPQARRAYGSQPRQSGHQRR. Positions 577–586 are enriched in polar residues; it reads QPRQSGHQRR.

The protein belongs to the DEAD box helicase family. DDX18/HAS1 subfamily. As to quaternary structure, associates in the nucleolus with the 60S and pre-60S ribosomal subunits.

It localises to the nucleus. It is found in the nucleolus. The catalysed reaction is ATP + H2O = ADP + phosphate + H(+). ATP-dependent RNA helicase involved in 40S ribosomal subunit biogenesis. Required for the processing and cleavage of 35S pre-rRNA at sites A0, A1, and A2, leading to mature 18S rRNA. This chain is ATP-dependent RNA helicase HAS1 (HAS1), found in Chaetomium globosum (strain ATCC 6205 / CBS 148.51 / DSM 1962 / NBRC 6347 / NRRL 1970) (Soil fungus).